We begin with the raw amino-acid sequence, 578 residues long: Peptidyl-prolyl cis-trans isomerase-like 2 (578 aa).

Residues 40-114 (RRLPFNFCAA…SDSLGAGLSD (75 aa)) enclose the U-box domain. A disordered region spans residues 240 to 260 (KAREQGGDVNRSSTALTKPTG). A PPIase cyclophilin-type domain is found at 321–475 (ATGFARMETN…NKILIKDIVI (155 aa)). Positions 505–578 (GTDDDKTTWT…GGGFGNFDNW (74 aa)) are disordered. A compositionally biased stretch (polar residues) spans 538-548 (KTTTQQSTPTV). Over residues 551–560 (ADLEDVDTWE) the composition is skewed to acidic residues. The segment covering 569–578 (GGGFGNFDNW) has biased composition (gly residues).

It belongs to the cyclophilin-type PPIase family. PPIL2 subfamily.

Its subcellular location is the nucleus. The catalysed reaction is [protein]-peptidylproline (omega=180) = [protein]-peptidylproline (omega=0). The enzyme catalyses S-ubiquitinyl-[E2 ubiquitin-conjugating enzyme]-L-cysteine + [acceptor protein]-L-lysine = [E2 ubiquitin-conjugating enzyme]-L-cysteine + N(6)-ubiquitinyl-[acceptor protein]-L-lysine.. The protein operates within protein modification; protein ubiquitination. May catalyze the cis-trans isomerization of proline imidic peptide bonds in oligopeptides thereby assisting the folding of proteins. May also function as a chaperone, playing a role in intracellular transport of proteins. May also have a protein ubiquitin ligase activity acting as an E3 ubiquitin protein ligase or as a ubiquitin-ubiquitin ligase promoting elongation of ubiquitin chains on proteins. This is Peptidyl-prolyl cis-trans isomerase-like 2 (CYP8) from Gibberella zeae (strain ATCC MYA-4620 / CBS 123657 / FGSC 9075 / NRRL 31084 / PH-1) (Wheat head blight fungus).